Reading from the N-terminus, the 280-residue chain is Chemotaxis protein methyltransferase 2 (280 aa).

The region spanning 10-280 is the CheR-type methyltransferase domain; that stretch reads FGNQEFHYTR…SVGQTVYSPA (271 aa). Residues N85, T87, R91, E125, D150, 208–209, and 226–227 each bind S-adenosyl-L-methionine; these read NL and RN.

As to quaternary structure, interacts with the C-terminal pentapeptide GWEEF of the methyl-accepting chemotaxis protein McpB.

The catalysed reaction is L-glutamyl-[protein] + S-adenosyl-L-methionine = [protein]-L-glutamate 5-O-methyl ester + S-adenosyl-L-homocysteine. Methylation of the methyl-accepting chemotaxis proteins (MCP) to form gamma-glutamyl methyl ester residues in MCP. It specifically targets the McpB chemoreceptor. The protein is Chemotaxis protein methyltransferase 2 of Pseudomonas aeruginosa (strain ATCC 15692 / DSM 22644 / CIP 104116 / JCM 14847 / LMG 12228 / 1C / PRS 101 / PAO1).